The sequence spans 138 residues: Large ribosomal subunit protein uL16 (138 aa).

It belongs to the universal ribosomal protein uL16 family. Part of the 50S ribosomal subunit.

In terms of biological role, binds 23S rRNA and is also seen to make contacts with the A and possibly P site tRNAs. The polypeptide is Large ribosomal subunit protein uL16 (Anaeromyxobacter dehalogenans (strain 2CP-C)).